We begin with the raw amino-acid sequence, 150 residues long: Helix-loop-helix protein hlh-12 (150 aa).

The interval methionine 1–glutamine 24 is disordered. The span at asparagine 11–glutamine 24 shows a compositional bias: basic and acidic residues. Positions aspartate 13–valine 26 are basic motif. A bHLH domain is found at aspartate 13 to leucine 65. The segment at serine 27–leucine 65 is helix-loop-helix motif.

As to quaternary structure, forms a heterodimer with helix-loop-helix protein hlh-2.

The protein localises to the nucleus. Transcription factor which binds the E box motif 5'-GCAGGTG-3'. Involved in migration of the gonadal leader cells; distal tip cells (DTCs) in hermaphrodites, and linker cells in males. Positively regulates expression of alpha integrin ina-1 and ADAMTS protease gon-1. In Caenorhabditis elegans, this protein is Helix-loop-helix protein hlh-12.